A 432-amino-acid polypeptide reads, in one-letter code: Interleukin-11 receptor subunit alpha-1 (432 aa).

Positions 1–23 (MSSSCSGLTRVLVAVATALVSSS) are cleaved as a signal peptide. Topologically, residues 24–372 (SPCPQAWGPP…DPLEQVAVLA (349 aa)) are extracellular. One can recognise an Ig-like C2-type domain in the interval 27–110 (PQAWGPPGVQ…SGGMVTLKLG (84 aa)). Intrachain disulfides connect Cys48–Cys94, Cys120–Cys130, and Cys170–Cys180. Fibronectin type-III domains are found at residues 112–219 (PPAR…LRPD) and 220–317 (PPQG…TPST). Asn127 is a glycosylation site (N-linked (GlcNAc...) asparagine). The segment at 151 to 170 (KTLPGAESQRESPSTGPWPC) is disordered. Asn194 carries N-linked (GlcNAc...) asparagine glycosylation. The WSXWS motif signature appears at 304-308 (WSAWS). Disordered regions lie at residues 309–332 (PEAW…QGHG) and 342–361 (EDSP…PLDH). The chain crosses the membrane as a helical span at residues 373 to 393 (SLGIFSCLGLAVGALALGLWL). At 394 to 432 (RLRRSGKDGPQKPGLLAPMIPVEKLPGIPNLQRTPENFS) the chain is on the cytoplasmic side.

Belongs to the type I cytokine receptor family. Type 3 subfamily. As to quaternary structure, on IL11 binding, forms a multimer complex with IL6ST/gp130. In terms of processing, a short soluble form is also released from the membrane by proteolysis. The sIL11RA is formed either by limited proteolysis of membrane-bound receptors, a process referred to as ectodomain shedding, or directly secreted from the cells after alternative mRNA splicing. mIL11RA is cleaved by the proteases ADAM10, ELANE and PRTN3. Widely expressed in all adult tissues and in embryos. Highest levels in kidney, skeletal muscle and embryo.

The protein resides in the membrane. It localises to the secreted. Its function is as follows. Receptor for interleukin-11. The receptor systems for IL6, LIF, OSM, CNTF, IL11 and CT1 can utilize IL6ST for initiating signal transmission. The IL11/IL11RA/IL6ST complex may be involved in the control of proliferation and/or differentiation of skeletogenic progenitor or other mesenchymal cells. Essential for the normal development of craniofacial bones and teeth. Soluble form of IL11 receptor (sIL11RA) that acts as an agonist of IL11 activity. The IL11:sIL11RA complex binds to IL6ST/gp130 on cell surfaces and induces signaling also on cells that do not express membrane-bound IL11RA in a process called IL11 trans-signaling. This is Interleukin-11 receptor subunit alpha-1 from Mus musculus (Mouse).